The chain runs to 216 residues: Cytochrome c oxidase subunit 2 (216 aa).

Residues 1–8 lie on the Mitochondrial intermembrane side of the membrane; the sequence is LGLQNATS. The chain crosses the membrane as a helical span at residues 9–39; it reads PIMEELIAFHDHALMIIFLISSLVLYIISLM. Residues 40–53 are Mitochondrial matrix-facing; sequence LTTKLTHTSTMNAQ. A helical transmembrane segment spans residues 54 to 81; it reads EIEMIWTILPAVILIMIALPSLRILYMT. Residues 82–216 lie on the Mitochondrial intermembrane side of the membrane; the sequence is DEFNKPYLTL…FIYFQDFEVW (135 aa). Residues His-155, Cys-190, Glu-192, Cys-194, His-198, and Met-201 each contribute to the Cu cation site. Glu-192 provides a ligand contact to Mg(2+).

This sequence belongs to the cytochrome c oxidase subunit 2 family. In terms of assembly, component of the cytochrome c oxidase (complex IV, CIV), a multisubunit enzyme composed of 14 subunits. The complex is composed of a catalytic core of 3 subunits MT-CO1, MT-CO2 and MT-CO3, encoded in the mitochondrial DNA, and 11 supernumerary subunits COX4I, COX5A, COX5B, COX6A, COX6B, COX6C, COX7A, COX7B, COX7C, COX8 and NDUFA4, which are encoded in the nuclear genome. The complex exists as a monomer or a dimer and forms supercomplexes (SCs) in the inner mitochondrial membrane with NADH-ubiquinone oxidoreductase (complex I, CI) and ubiquinol-cytochrome c oxidoreductase (cytochrome b-c1 complex, complex III, CIII), resulting in different assemblies (supercomplex SCI(1)III(2)IV(1) and megacomplex MCI(2)III(2)IV(2)). Found in a complex with TMEM177, COA6, COX18, COX20, SCO1 and SCO2. Interacts with TMEM177 in a COX20-dependent manner. Interacts with COX20. Interacts with COX16. It depends on Cu cation as a cofactor.

It localises to the mitochondrion inner membrane. The enzyme catalyses 4 Fe(II)-[cytochrome c] + O2 + 8 H(+)(in) = 4 Fe(III)-[cytochrome c] + 2 H2O + 4 H(+)(out). Its function is as follows. Component of the cytochrome c oxidase, the last enzyme in the mitochondrial electron transport chain which drives oxidative phosphorylation. The respiratory chain contains 3 multisubunit complexes succinate dehydrogenase (complex II, CII), ubiquinol-cytochrome c oxidoreductase (cytochrome b-c1 complex, complex III, CIII) and cytochrome c oxidase (complex IV, CIV), that cooperate to transfer electrons derived from NADH and succinate to molecular oxygen, creating an electrochemical gradient over the inner membrane that drives transmembrane transport and the ATP synthase. Cytochrome c oxidase is the component of the respiratory chain that catalyzes the reduction of oxygen to water. Electrons originating from reduced cytochrome c in the intermembrane space (IMS) are transferred via the dinuclear copper A center (CU(A)) of subunit 2 and heme A of subunit 1 to the active site in subunit 1, a binuclear center (BNC) formed by heme A3 and copper B (CU(B)). The BNC reduces molecular oxygen to 2 water molecules using 4 electrons from cytochrome c in the IMS and 4 protons from the mitochondrial matrix. The polypeptide is Cytochrome c oxidase subunit 2 (MT-CO2) (Callimico goeldii (Goeldi's marmoset)).